We begin with the raw amino-acid sequence, 103 residues long: Pseudonajatoxin b homolog (103 aa).

An N-terminal signal peptide occupies residues 1–21 (MKTLLLTLVVVTIVCLDLGYT). Disulfide bonds link Cys-24–Cys-42, Cys-35–Cys-63, Cys-48–Cys-52, Cys-67–Cys-79, and Cys-80–Cys-85.

This sequence belongs to the three-finger toxin family. Long-chain subfamily. Type II alpha-neurotoxin sub-subfamily. As to expression, expressed by the venom gland.

Its subcellular location is the secreted. Binds with high affinity to muscular (alpha-1/CHRNA1) and neuronal (alpha-7/CHRNA7) nicotinic acetylcholine receptor (nAChR) and inhibits acetylcholine from binding to the receptor, thereby impairing neuromuscular and neuronal transmission. In Pseudonaja textilis (Eastern brown snake), this protein is Pseudonajatoxin b homolog.